A 197-amino-acid chain; its full sequence is MDLIDRISRQFEDSAQTKLAAVEWMAAPIAQAVEMMTASLMNNGKILACGNGGSAADAQHFAAELLNRFEMERPPLAAVALTTDTSTLTSIANDYDFVQVFSKQVRALGQPGDVLLAISTSGNSPNVIDAIQAAHEREMHVVALTGKGGGRIGEMLSPTDVHLCVPADRTARIQEVHLLTLHCLCDGIDCLLLGVEE.

In terms of domain architecture, SIS spans M36–E197. Substrate is bound at residue N51–G53. Residues H60 and E64 each contribute to the Zn(2+) site. Substrate is bound by residues E64, N93–D94, S119–S121, S124, and Q174. Zn(2+) contacts are provided by Q174 and H182.

It belongs to the SIS family. GmhA subfamily. As to quaternary structure, homotetramer. Zn(2+) is required as a cofactor.

The protein resides in the cytoplasm. It catalyses the reaction 2 D-sedoheptulose 7-phosphate = D-glycero-alpha-D-manno-heptose 7-phosphate + D-glycero-beta-D-manno-heptose 7-phosphate. The protein operates within carbohydrate biosynthesis; D-glycero-D-manno-heptose 7-phosphate biosynthesis; D-glycero-alpha-D-manno-heptose 7-phosphate and D-glycero-beta-D-manno-heptose 7-phosphate from sedoheptulose 7-phosphate: step 1/1. Functionally, catalyzes the isomerization of sedoheptulose 7-phosphate in D-glycero-D-manno-heptose 7-phosphate. The protein is Phosphoheptose isomerase of Azoarcus sp. (strain BH72).